We begin with the raw amino-acid sequence, 392 residues long: MKIHEYQGKAILRKYGVAVPRGEMVTTREEAERVANDLMHDGAKGVVVKAQIHAGGRGKGGGVKIAKSVDEAGQLAGKILGMTLITHQTGPEGKKVQRLLIEETLPIERELYLSIVLDRSNGKPVFMASAAGGMEIEEVAAKDPNAIIKEWIEPGYGLGAFQARKIAFKLGLKPELIGQAVKFMQALYKTYDETDASLVEINPFITTSDNRLFALDAKFNFDDNGLFRHPDLKDLRDVTEEDPLEVEASKYGLNYIKLDGTVGCMVNGAGLAMATMDIIQYAGGMPANFLDVGGGANAEQVTHAFEILLSDKNVKAVLINIFGGILRVDTLATGVVQAATQTKIQLPIVLRLEGTNVEQGREILQKSGLNFIVAETMKDAAEKVVAAAKGVK.

In terms of domain architecture, ATP-grasp spans 9–247 (KAILRKYGVA…VTEEDPLEVE (239 aa)). ATP contacts are provided by residues K49, 56-58 (GRG), E102, L105, and E110. Residues N202 and D216 each contribute to the Mg(2+) site. Substrate contacts are provided by residues N267 and 324–326 (GIL).

It belongs to the succinate/malate CoA ligase beta subunit family. In terms of assembly, heterotetramer of two alpha and two beta subunits. Requires Mg(2+) as cofactor.

The enzyme catalyses succinate + ATP + CoA = succinyl-CoA + ADP + phosphate. It carries out the reaction GTP + succinate + CoA = succinyl-CoA + GDP + phosphate. The protein operates within carbohydrate metabolism; tricarboxylic acid cycle; succinate from succinyl-CoA (ligase route): step 1/1. In terms of biological role, succinyl-CoA synthetase functions in the citric acid cycle (TCA), coupling the hydrolysis of succinyl-CoA to the synthesis of either ATP or GTP and thus represents the only step of substrate-level phosphorylation in the TCA. The beta subunit provides nucleotide specificity of the enzyme and binds the substrate succinate, while the binding sites for coenzyme A and phosphate are found in the alpha subunit. This Koribacter versatilis (strain Ellin345) protein is Succinate--CoA ligase [ADP-forming] subunit beta.